Consider the following 355-residue polypeptide: Ion-translocating oxidoreductase complex subunit D (355 aa).

5 helical membrane-spanning segments follow: residues 13–33 (GKLT…ALAV), 35–55 (VYYF…LALI), 77–97 (VILT…YWVI), 98–118 (LIGT…LGQN), and 128–148 (VVLL…ISLL). Threonine 186 bears the FMN phosphoryl threonine mark. Helical transmembrane passes span 216-236 (AGLG…FLIW), 245-265 (PVAI…FGNA), 267-287 (AVGF…FFIA), 294-314 (PVTP…ICLI), and 318-338 (GNYP…VPLI).

Belongs to the NqrB/RnfD family. The complex is composed of six subunits: RnfA, RnfB, RnfC, RnfD, RnfE and RnfG. The cofactor is FMN.

The protein localises to the cell inner membrane. Functionally, part of a membrane-bound complex that couples electron transfer with translocation of ions across the membrane. In Actinobacillus succinogenes (strain ATCC 55618 / DSM 22257 / CCUG 43843 / 130Z), this protein is Ion-translocating oxidoreductase complex subunit D.